The primary structure comprises 553 residues: Undecaprenyl phosphate-alpha-4-amino-4-deoxy-L-arabinose arabinosyl transferase 2 (553 aa).

12 consecutive transmembrane segments (helical) span residues 6–26 (ASKIGAILLALFFVLTYLFPL), 85–105 (FAVRFGSVISILLSALLIYLL), 115–135 (VAFVASLIYLSMFLVFSVGTY), 137–157 (VLDPMLALWVTASMVCCFWAL), 178–198 (MAFMTKGFLALAIPVIVMIPV), 208–228 (MLLYGVLAVLSAALISLPWVL), 261–281 (FWYYIPIILLGVIPWLGLLPG), 295–315 (ELFFLLCWFVVPFLFFSIAKG), 317–337 (LPTYMLPFMGPLAMLMAKYGV), 352–372 (GYINIFIGVAAVVAILIIQLV), 386–406 (WVLAIVAFSLWGIIGYLCSTL), and 410–430 (HWLWAASCSLGVSLCIGQAIP).

It belongs to the glycosyltransferase 83 family.

Its subcellular location is the cell inner membrane. It carries out the reaction 4-amino-4-deoxy-alpha-L-arabinopyranosyl di-trans,octa-cis-undecaprenyl phosphate + lipid IVA = lipid IIA + di-trans,octa-cis-undecaprenyl phosphate.. The protein operates within lipopolysaccharide metabolism; 4-amino-4-deoxy-beta-L-arabinose-lipid A biosynthesis. Functionally, catalyzes the transfer of the L-Ara4N moiety of the glycolipid undecaprenyl phosphate-alpha-L-Ara4N to lipid A. The modified arabinose is attached to lipid A and is required for resistance to polymyxin and cationic antimicrobial peptides. The chain is Undecaprenyl phosphate-alpha-4-amino-4-deoxy-L-arabinose arabinosyl transferase 2 from Proteus mirabilis (strain HI4320).